Reading from the N-terminus, the 366-residue chain is Ribosomal RNA large subunit methyltransferase M (366 aa).

S-adenosyl-L-methionine contacts are provided by residues serine 188, 221-224, aspartate 240, aspartate 260, and aspartate 277; that span reads CPGG. Lysine 306 serves as the catalytic Proton acceptor.

This sequence belongs to the class I-like SAM-binding methyltransferase superfamily. RNA methyltransferase RlmE family. RlmM subfamily. Monomer.

The protein resides in the cytoplasm. The catalysed reaction is cytidine(2498) in 23S rRNA + S-adenosyl-L-methionine = 2'-O-methylcytidine(2498) in 23S rRNA + S-adenosyl-L-homocysteine + H(+). Its function is as follows. Catalyzes the 2'-O-methylation at nucleotide C2498 in 23S rRNA. This is Ribosomal RNA large subunit methyltransferase M from Sodalis glossinidius (strain morsitans).